The chain runs to 339 residues: MHRTYSLRNSRAPTASQLQNPPPPPSTTKGRFFGKGGLAYSFRRSAAGAFGPELSRKLSQLVKIEKNVLRSMELTANERRDAAKQLSIWGLENDDDVSDITDKLGVLIYEVSELDDQFIDRYDQYRLTLKSIRDIEGSVQPSRDRKDKITDKIAYLKYKDPQSPKIEVLEQELVRAEAESLVAEAQLSNITRSKLRAAFNYQFDSIIEHSEKIALIAGYGKALLELLDDSPVTPGETRPAYDGYEASKQIIIDAESALNEWTLDSAQVKPTLSFKQDYEDFEPEEGEEEEEEDGQGRWSEDEQEDGQIEEPEQEEEGAVEEHEQVGHQQSESLPQQTTA.

The span at 1–19 shows a compositional bias: polar residues; that stretch reads MHRTYSLRNSRAPTASQLQ. The segment at 1–31 is disordered; sequence MHRTYSLRNSRAPTASQLQNPPPPPSTTKGR. The residue at position 14 (T14) is a Phosphothreonine. S16 carries the phosphoserine modification. A Glycyl lysine isopeptide (Lys-Gly) (interchain with G-Cter in ubiquitin) cross-link involves residue K29. A phosphoserine mark is found at S45, S98, S163, and S230. Residue T233 is modified to Phosphothreonine. The segment at 273-339 is disordered; that stretch reads SFKQDYEDFE…SESLPQQTTA (67 aa). Acidic residues predominate over residues 279–293; the sequence is EDFEPEEGEEEEEED. At S299 the chain carries Phosphoserine. Over residues 301–318 the composition is skewed to acidic residues; it reads DEQEDGQIEEPEQEEEGA. Residues 326-339 show a composition bias toward polar residues; the sequence is GHQQSESLPQQTTA.

Post-translationally, phosphorylated by PKH1 and PKH2. Phosphorylation is inhibited by sphingolipid long chain bases (LCBs).

It localises to the lipid droplet. Functionally, negative regulator of cell wall integrity (CWI) in unstressed cells, probably by inhibiting protein kinase PKH1/PHK2 activity and regulating their downstream CWI pathways PKC1-MAP kinase pathway and protein kinase YPK1 pathway. Activity may be regulated by the transient increase of sphingolipid long chain bases (LCBs) during heat stress. This Saccharomyces cerevisiae (strain ATCC 204508 / S288c) (Baker's yeast) protein is Sphingolipid long chain base-responsive protein PIL1 (PIL1).